Consider the following 416-residue polypeptide: Serine--tRNA ligase (416 aa).

232 to 234 contacts L-serine; it reads TAE. ATP is bound at residue 263–265; that stretch reads RKE. An L-serine-binding site is contributed by Glu286. ATP is bound at residue 350–353; it reads EISS. Ser384 serves as a coordination point for L-serine.

Belongs to the class-II aminoacyl-tRNA synthetase family. Type-1 seryl-tRNA synthetase subfamily. In terms of assembly, homodimer. The tRNA molecule binds across the dimer.

The protein resides in the cytoplasm. It catalyses the reaction tRNA(Ser) + L-serine + ATP = L-seryl-tRNA(Ser) + AMP + diphosphate + H(+). The enzyme catalyses tRNA(Sec) + L-serine + ATP = L-seryl-tRNA(Sec) + AMP + diphosphate + H(+). The protein operates within aminoacyl-tRNA biosynthesis; selenocysteinyl-tRNA(Sec) biosynthesis; L-seryl-tRNA(Sec) from L-serine and tRNA(Sec): step 1/1. Functionally, catalyzes the attachment of serine to tRNA(Ser). Is also able to aminoacylate tRNA(Sec) with serine, to form the misacylated tRNA L-seryl-tRNA(Sec), which will be further converted into selenocysteinyl-tRNA(Sec). The sequence is that of Serine--tRNA ligase from Nautilia profundicola (strain ATCC BAA-1463 / DSM 18972 / AmH).